A 406-amino-acid chain; its full sequence is Phosphopentomutase (406 aa).

The Mn(2+) site is built by D10, D305, H310, D346, H347, and H358.

It belongs to the phosphopentomutase family. Mn(2+) serves as cofactor.

Its subcellular location is the cytoplasm. The enzyme catalyses 2-deoxy-alpha-D-ribose 1-phosphate = 2-deoxy-D-ribose 5-phosphate. It carries out the reaction alpha-D-ribose 1-phosphate = D-ribose 5-phosphate. Its pathway is carbohydrate degradation; 2-deoxy-D-ribose 1-phosphate degradation; D-glyceraldehyde 3-phosphate and acetaldehyde from 2-deoxy-alpha-D-ribose 1-phosphate: step 1/2. In terms of biological role, isomerase that catalyzes the conversion of deoxy-ribose 1-phosphate (dRib-1-P) and ribose 1-phosphate (Rib-1-P) to deoxy-ribose 5-phosphate (dRib-5-P) and ribose 5-phosphate (Rib-5-P), respectively. The chain is Phosphopentomutase from Vibrio cholerae serotype O1 (strain ATCC 39541 / Classical Ogawa 395 / O395).